The following is a 585-amino-acid chain: A-type ATP synthase subunit A (585 aa).

Residue 231–238 participates in ATP binding; sequence GPFGSGKT.

It belongs to the ATPase alpha/beta chains family. In terms of assembly, has multiple subunits with at least A(3), B(3), C, D, E, F, H, I and proteolipid K(x).

Its subcellular location is the cell membrane. It catalyses the reaction ATP + H2O + 4 H(+)(in) = ADP + phosphate + 5 H(+)(out). Functionally, component of the A-type ATP synthase that produces ATP from ADP in the presence of a proton gradient across the membrane. The A chain is the catalytic subunit. This chain is A-type ATP synthase subunit A, found in Thermococcus sibiricus (strain DSM 12597 / MM 739).